Reading from the N-terminus, the 1779-residue chain is Fibronectin type III domain-containing protein 1 (1779 aa).

Residues 1–29 (MAPEARASPRLLLRAALLLLAALLPVASS) form the signal peptide. Fibronectin type-III domains follow at residues 33-126 (PVDH…KAPR), 103-203 (PNKP…AEED), 207-302 (VPED…TPES), and 307-402 (APEN…IPTT). Over residues 400-413 (PTTSSTEASVQPNG) the composition is skewed to polar residues. 4 disordered regions span residues 400–442 (PTTS…MPPA), 459–1108 (NGVA…RNLD), 1120–1227 (EENT…KPNG), and 1330–1401 (PTTT…PPGT). The span at 423 to 437 (QQPSSSAPKVAASSQ) shows a compositional bias: low complexity. Over residues 493-506 (NPRSSRLETLNQKQ) the composition is skewed to polar residues. The segment covering 534 to 554 (SRKEGMDRRGPSLDPHPHPRV) has biased composition (basic and acidic residues). Polar residues-rich tracts occupy residues 557 to 570 (SASS…STDN) and 590 to 607 (SSGS…TSAP). Residues 629–640 (ASSSTSRQSHSS) show a composition bias toward low complexity. Phosphoserine is present on Ser-651. Low complexity predominate over residues 676–694 (HASSSHTTSRTASSSHPSA). A Phosphoserine modification is found at Ser-699. A compositionally biased stretch (basic and acidic residues) spans 707 to 720 (DSDRAAEDTIRRAE). 2 stretches are compositionally biased toward polar residues: residues 763–784 (PSVS…SLPA) and 861–875 (PLSS…STTD). A compositionally biased stretch (low complexity) spans 879-904 (PQTSPASTSRQPSPARPPASRSQPSP). Composition is skewed to polar residues over residues 957 to 971 (APQN…TYED) and 1003 to 1020 (VGSQ…SQAG). The segment covering 1085-1097 (LSTSVKKWPSSSS) has biased composition (low complexity). The segment covering 1098–1108 (PRDKYADRNLD) has biased composition (basic and acidic residues). 2 stretches are compositionally biased toward polar residues: residues 1147-1159 (NPAT…NTHS) and 1166-1177 (RAPSSYSSTTPM). A compositionally biased stretch (low complexity) spans 1330–1389 (PTTTMPPSTTTTTVPPTTTLPPTTTTTRRTTTTRRTTTTRRPTTTTRATRRTTTTTTTPE). A Fibronectin type-III 5 domain is found at 1543–1637 (APRNITVVAM…PSVSFVTESD (95 aa)). N-linked (GlcNAc...) asparagine glycosylation is present at Asn-1546.

The protein resides in the secreted. Functionally, may be an activator of G protein signaling. This is Fibronectin type III domain-containing protein 1 (Fndc1) from Rattus norvegicus (Rat).